We begin with the raw amino-acid sequence, 533 residues long: Probable lipid II flippase MurJ (533 aa).

14 consecutive transmembrane segments (helical) span residues 11 to 31 (LANIAGIVAIATLISKVFGLL), 39 to 61 (AFGVGTVVTAYAYAYVIPGFLFI), 96 to 116 (LVSGVLLGVTIILVLGAGIFI), 135 to 155 (LQIMAPMALLSGLIGIGFGTL), 166 to 186 (ISPLLSSITVILGLGVAVWQL), 196 to 216 (WLLGSLLLAGGTTAGAVLQWL), 253 to 273 (LSSGMLYINFATNLFFASFIP), 284 to 304 (FVALTPLGIISNMILVPFLPV), 330 to 350 (LTMFPLTAILVGLAIPIVQVI), 360 to 380 (AAAEVAPVLAAYGLGMFFYLG), 400 to 420 (VSLFNIFLNGLLDYLFYKPFG), 422 to 442 (VGIVMATVGVNLFSMTIFIWM), 452 to 472 (LGGWAMDLGKLVGVTAIASVA), and 493 to 513 (ILEVLTMSSIILVVFTVGVAL).

This sequence belongs to the MurJ/MviN family.

Its subcellular location is the cell inner membrane. It participates in cell wall biogenesis; peptidoglycan biosynthesis. In terms of biological role, involved in peptidoglycan biosynthesis. Transports lipid-linked peptidoglycan precursors from the inner to the outer leaflet of the cytoplasmic membrane. In Synechocystis sp. (strain ATCC 27184 / PCC 6803 / Kazusa), this protein is Probable lipid II flippase MurJ.